Reading from the N-terminus, the 417-residue chain is MELDPSDSNSRVVDASQFSKYRDAGALVSKAFHQVASRCVPGASTREISSYGDNLLHEYKSSIYKSQRFEKGIAEPTSICVNNCAYNYAPGPESVIAGNDNSYHLQVGDVTKISMGLHFDGYTALISHTIVVTPPPQPGMGPYIGPGADAICAAHYASKAVANLLATNNSDDPITGSRLRKIVDDIASQFRVSVCPGSRIRRISRFLVGQPTIDRLEEDQNTKHAVEWPAPEEETRKADVTNSLDPANVLSTELNTWHVMPKEAWLIDISMSSQPISSLKEHPDLKPTLYIHDVNVSYMLKLKASRSLLSEIKKEKSVFPFHFGSLSSERNLLGLRELTDRHILVPMPVLISSPSNVIAREELTVITQPNPSSDLLCLTVPTPPSYVKSDFSLEDGTDAALICEGINVNIKSININV.

The protein belongs to the peptidase M24 family. In terms of assembly, component of the nucleoplasmic and cytoplasmic pre-60S ribosomal particles.

Its subcellular location is the cytoplasm. The protein resides in the nucleus. Functionally, probable metalloprotease involved in proper assembly of pre-ribosomal particles during the biogenesis of the 60S ribosomal subunit. Accompanies the pre-60S particles to the cytoplasm. This Schizosaccharomyces pombe (strain 972 / ATCC 24843) (Fission yeast) protein is Probable metalloprotease arx1 (arx1).